A 113-amino-acid chain; its full sequence is U11-theraphotoxin-Hhn1m (113 aa).

A signal peptide spans 1–21 (MNTVRGTFLLVFGLAASLGQA). Residues 22-74 (DKNENRREMQKKTEQGKSYLNFAENLLLQKLEELEAKLLEKHSKKSKNSRQKR) constitute a propeptide that is removed on maturation. 3 cysteine pairs are disulfide-bonded: C75-C90, C82-C95, and C89-C110.

This sequence belongs to the neurotoxin 14 (magi-1) family. 01 (HNTX-16) subfamily. Expressed by the venom gland.

It is found in the secreted. Probable ion channel inhibitor. This chain is U11-theraphotoxin-Hhn1m, found in Cyriopagopus hainanus (Chinese bird spider).